The following is a 321-amino-acid chain: Glutamyl-Q tRNA(Asp) synthetase (321 aa).

Residues 25–29 (RFAPS) and glutamate 61 contribute to the L-glutamate site. Positions 28–38 (PSPSGDLHFGS) match the 'HIGH' region motif. Zn(2+) is bound by residues cysteine 117, cysteine 119, tyrosine 131, and cysteine 135. Residues tyrosine 188 and arginine 206 each contribute to the L-glutamate site. Positions 244 to 248 (KLSKQ) match the 'KMSKS' region motif. Lysine 247 serves as a coordination point for ATP.

The protein belongs to the class-I aminoacyl-tRNA synthetase family. GluQ subfamily. Requires Zn(2+) as cofactor.

Its function is as follows. Catalyzes the tRNA-independent activation of glutamate in presence of ATP and the subsequent transfer of glutamate onto a tRNA(Asp). Glutamate is transferred on the 2-amino-5-(4,5-dihydroxy-2-cyclopenten-1-yl) moiety of the queuosine in the wobble position of the QUC anticodon. The polypeptide is Glutamyl-Q tRNA(Asp) synthetase (Yersinia pestis).